A 239-amino-acid chain; its full sequence is Ubiquinone biosynthesis O-methyltransferase (239 aa).

S-adenosyl-L-methionine contacts are provided by arginine 44, glycine 63, aspartate 84, and methionine 128.

This sequence belongs to the methyltransferase superfamily. UbiG/COQ3 family.

It carries out the reaction a 3-demethylubiquinol + S-adenosyl-L-methionine = a ubiquinol + S-adenosyl-L-homocysteine + H(+). It catalyses the reaction a 3-(all-trans-polyprenyl)benzene-1,2-diol + S-adenosyl-L-methionine = a 2-methoxy-6-(all-trans-polyprenyl)phenol + S-adenosyl-L-homocysteine + H(+). It participates in cofactor biosynthesis; ubiquinone biosynthesis. Its function is as follows. O-methyltransferase that catalyzes the 2 O-methylation steps in the ubiquinone biosynthetic pathway. The chain is Ubiquinone biosynthesis O-methyltransferase from Xanthomonas oryzae pv. oryzae (strain MAFF 311018).